Here is a 161-residue protein sequence, read N- to C-terminus: Endoribonuclease YbeY (161 aa).

Zn(2+) is bound by residues His121, His125, and His131.

The protein belongs to the endoribonuclease YbeY family. The cofactor is Zn(2+).

Its subcellular location is the cytoplasm. In terms of biological role, single strand-specific metallo-endoribonuclease involved in late-stage 70S ribosome quality control and in maturation of the 3' terminus of the 16S rRNA. In Xanthomonas campestris pv. campestris (strain 8004), this protein is Endoribonuclease YbeY.